Consider the following 1138-residue polypeptide: Pesticidal crystal protein Cry7Ab (1138 aa).

It belongs to the delta endotoxin family.

Its function is as follows. Promotes colloidosmotic lysis by binding to the midgut epithelial cells of Coleoptera. This is Pesticidal crystal protein Cry7Ab (cry7Ab) from Bacillus thuringiensis subsp. dakota.